A 670-amino-acid chain; its full sequence is Receptor for retinol uptake stra6 (670 aa).

Residues 1–38 (MSAETVNNYDYSDWYENAAPTKAPVEVIPPCDPTADEG) are Extracellular-facing. The chain crosses the membrane as a helical span at residues 39–59 (LFHICIAAISLVVMLVLAILA). The Cytoplasmic segment spans residues 60–87 (RRQKLSDNQRGLTGLLSPVNFLDHTQHK). The chain crosses the membrane as a helical span at residues 88 to 108 (GLAVAVYGVLFCKLVGMVLSH). Topologically, residues 109–121 (HPLPFTKEVANKE) are extracellular. Residues 122 to 142 (FWMILALLYYPALYYPLLACG) form a helical membrane-spanning segment. At 143-145 (TLH) the chain is on the cytoplasmic side. Residues 146 to 166 (NKVGYVLGSLLSWTHFGILVW) traverse the membrane as a helical segment. Residues 167–182 (QKVDCPKTPQIYKYYA) lie on the Extracellular side of the membrane. Residues 183 to 203 (LFGSLPQIACLAFLSFQYPLL) form a helical membrane-spanning segment. The Cytoplasmic portion of the chain corresponds to 204-274 (LFKGLQNTET…PEDVFRFPLK (71 aa)). Residues 275 to 295 (LAISVVVAFIALYQMALLLIS) traverse the membrane as a helical segment. The Extracellular portion of the chain corresponds to 296-346 (GVLPTLHIVRRGVDENIAFLLAGFNIILSNDRQEVVRIVVYYLWCVEICYV). A helical transmembrane segment spans residues 347–367 (SAVTLSCLVNLLMLMRSMVLH). At 368 to 401 (RSNLKGLYRGDSLNVFNCHRSIRPSRPALVCWMG) the chain is on the cytoplasmic side. The chain crosses the membrane as a helical span at residues 402–422 (FTSYQAAFLCLGMAIQTLVFF). Residues 423–452 (ICILFAVFLIIIPILWGTNLMLFHIIGNLW) are Extracellular-facing. The chain crosses the membrane as a helical span at residues 453 to 473 (PFWLTLVLAALIQHVASRFLF). Topologically, residues 474-488 (IRKDGGTRDLNNRGS) are cytoplasmic. An intramembrane region (helical) is located at residues 489-526 (LFLLSYILFLVNVMIGVVLGIWRVVITALFNIVHLGRL). Topologically, residues 527–670 (DISLLNRNVE…KEAESAAASN (144 aa)) are cytoplasmic. The tract at residues 600 to 626 (VSNAKRARAHWQLLYTLVNNPSLVGSR) is interaction with calmodulin. A disordered region spans residues 640 to 670 (GALSRTSKEGSKKDGSVNEPSKEAESAAASN). Basic and acidic residues predominate over residues 645 to 664 (TSKEGSKKDGSVNEPSKEAE).

As to quaternary structure, homodimer. Interacts (via C-terminus) with calmodulin.

It localises to the cell membrane. Its function is as follows. Retinol transporter. Accepts retinol from the extracellular retinol-binding protein rbp4, mediates retinol transport across the cell membrane, and then transmits retinol to the cytoplasmic retinol-binding protein rbp1. Required for normal vitamin A homeostasis. The protein is Receptor for retinol uptake stra6 of Danio rerio (Zebrafish).